A 393-amino-acid polypeptide reads, in one-letter code: Branched-chain-amino-acid aminotransferase, mitochondrial (393 aa).

The N-terminal 27 residues, 1–27, are a transit peptide targeting the mitochondrion; sequence MSAAILGQVWTRKLLPIPWRLCVPGRC. Y169 contacts substrate. Position 230 is an N6-(pyridoxal phosphate)lysine (K230). K322 is subject to N6-acetyllysine.

Belongs to the class-IV pyridoxal-phosphate-dependent aminotransferase family. Homodimer. Pyridoxal 5'-phosphate is required as a cofactor. In terms of tissue distribution, expressed in all tissues.

It is found in the mitochondrion. The catalysed reaction is L-leucine + 2-oxoglutarate = 4-methyl-2-oxopentanoate + L-glutamate. It catalyses the reaction L-isoleucine + 2-oxoglutarate = (S)-3-methyl-2-oxopentanoate + L-glutamate. It carries out the reaction L-valine + 2-oxoglutarate = 3-methyl-2-oxobutanoate + L-glutamate. Functionally, catalyzes the first reaction in the catabolism of the essential branched chain amino acids leucine, isoleucine, and valine. May also function as a transporter of branched chain alpha-keto acids. The protein is Branched-chain-amino-acid aminotransferase, mitochondrial (Bcat2) of Rattus norvegicus (Rat).